The primary structure comprises 557 residues: Enhancer of polycomb-like protein 1 (557 aa).

Disordered regions lie at residues 323–349 and 424–449; these read VKPA…RPQP and QSHN…TYST. Positions 327-337 are enriched in pro residues; that stretch reads APVPTPAPPVK. Residues 429–441 are compositionally biased toward low complexity; it reads LSIPSSTPSTPLS.

This sequence belongs to the enhancer of polycomb family. In terms of assembly, component of the NuA4 histone acetyltransferase complex.

The protein localises to the nucleus. Functionally, component of the NuA4 histone acetyltransferase complex which is involved in transcriptional activation of selected genes principally by acetylation of nucleosomal histone H4 and H2A. The NuA4 complex is also involved in DNA repair. Involved in gene silencing by neighboring heterochromatin, blockage of the silencing spreading along the chromosome, and required for cell cycle progression through G2/M. The protein is Enhancer of polycomb-like protein 1 (epl1) of Schizosaccharomyces pombe (strain 972 / ATCC 24843) (Fission yeast).